A 276-amino-acid polypeptide reads, in one-letter code: Pantothenate synthetase (276 aa).

27 to 34 (MGNLHDGH) is a binding site for ATP. His-34 serves as the catalytic Proton donor. Gln-58 contributes to the (R)-pantoate binding site. Beta-alanine is bound at residue Gln-58. Residue 145 to 148 (GKKD) coordinates ATP. Gln-151 contributes to the (R)-pantoate binding site. Residues Ile-174 and 182–185 (LSSR) each bind ATP.

The protein belongs to the pantothenate synthetase family. In terms of assembly, homodimer.

The protein resides in the cytoplasm. It carries out the reaction (R)-pantoate + beta-alanine + ATP = (R)-pantothenate + AMP + diphosphate + H(+). It participates in cofactor biosynthesis; (R)-pantothenate biosynthesis; (R)-pantothenate from (R)-pantoate and beta-alanine: step 1/1. Functionally, catalyzes the condensation of pantoate with beta-alanine in an ATP-dependent reaction via a pantoyl-adenylate intermediate. The chain is Pantothenate synthetase from Aromatoleum aromaticum (strain DSM 19018 / LMG 30748 / EbN1) (Azoarcus sp. (strain EbN1)).